Reading from the N-terminus, the 308-residue chain is MKIPMILGATAVGKTQFLVKLASLIPIEVVSVDSRQIYRYMDIGTAKPTREELSKLKHHVIDVVDPDEDFNVFEYRKIALKAMDEIVKKGRIPVFAGGSGLYAETLMKGIVENVPRNDKVREALKTLEVNAPGSLRKLLEKVDHEAYEKIHPNDLKRTIRYLEVFFTTGKTLTSLQKIHKCSNQFTVIILERDRRELAERIENRVDKMVESGLIEEVVRLKEMGYTRELNSQQTIGYAEIWSYLEGEVTLERATELIKRNTRRFARRQIIWFRRYKDAKRISLSETNENDILSLLKEDILNVWGGKYG.

8 to 15 (GATAVGKT) lines the ATP pocket. 10–15 (TAVGKT) provides a ligand contact to substrate. Residues 33 to 36 (DSRQ) are interaction with substrate tRNA.

The protein belongs to the IPP transferase family. As to quaternary structure, monomer. The cofactor is Mg(2+).

It catalyses the reaction adenosine(37) in tRNA + dimethylallyl diphosphate = N(6)-dimethylallyladenosine(37) in tRNA + diphosphate. In terms of biological role, catalyzes the transfer of a dimethylallyl group onto the adenine at position 37 in tRNAs that read codons beginning with uridine, leading to the formation of N6-(dimethylallyl)adenosine (i(6)A). This Kosmotoga olearia (strain ATCC BAA-1733 / DSM 21960 / TBF 19.5.1) protein is tRNA dimethylallyltransferase.